The following is a 267-amino-acid chain: NAD kinase 2 (267 aa).

The active-site Proton acceptor is D52. NAD(+) is bound by residues 52–53, 124–125, R151, D153, 164–169, and A188; these read DA, NE, and TAYNKS.

This sequence belongs to the NAD kinase family. A divalent metal cation is required as a cofactor.

Its subcellular location is the cytoplasm. It carries out the reaction NAD(+) + ATP = ADP + NADP(+) + H(+). In terms of biological role, involved in the regulation of the intracellular balance of NAD and NADP, and is a key enzyme in the biosynthesis of NADP. Catalyzes specifically the phosphorylation on 2'-hydroxyl of the adenosine moiety of NAD to yield NADP. The chain is NAD kinase 2 from Bacillus cereus (strain ATCC 10987 / NRS 248).